Here is a 304-residue protein sequence, read N- to C-terminus: Probable casein kinase I homolog ECU03_0910 (304 aa).

In terms of domain architecture, Protein kinase spans 8–304 (IKLVQKIASG…SDSMGDLEIL (297 aa)). Residues 14 to 22 (IASGAFGDI) and Lys-37 each bind ATP. The active-site Proton acceptor is the Asp-129.

It belongs to the protein kinase superfamily. CK1 Ser/Thr protein kinase family. Casein kinase I subfamily.

It is found in the nucleus. The enzyme catalyses L-seryl-[protein] + ATP = O-phospho-L-seryl-[protein] + ADP + H(+). The catalysed reaction is L-threonyl-[protein] + ATP = O-phospho-L-threonyl-[protein] + ADP + H(+). Involved in DNA repair. May regulate the activity of protein(s) involved in double strand break repair caused by gamma rays. The polypeptide is Probable casein kinase I homolog ECU03_0910 (Encephalitozoon cuniculi (strain GB-M1) (Microsporidian parasite)).